We begin with the raw amino-acid sequence, 309 residues long: MTLSQLKNCQIITALVTPFHADGSINFKALPELIEHLLNNHTQALLLAGTTAESPTLTHEEELELFSEVQRIVNGRVPLIAGIGTNDTRDSVDFAKEVANFGGFAAGLAIVPYYNKPTQEGLYQHFLAIAEASSLPIIIYNIPGRVVVDLHPDTLLKLAQHPNIIGVKDCTNLDHLAYIIENKPEDFLIYTGEDGQIFHAMNLGADGVISVASHTNGSEIFEMINHITNGRIKEAAQIQRRFLPKVNALFSVSSPAPVKAVLNYLGFNVGPLRLPLVACTRQEADAIINIVLDKAPKEYVTKGVLRPDY.

Thr51 contacts pyruvate. Residue Tyr140 is the Proton donor/acceptor of the active site. The active-site Schiff-base intermediate with substrate is Lys168. Ile209 contacts pyruvate.

Belongs to the DapA family. As to quaternary structure, homotetramer; dimer of dimers.

It is found in the cytoplasm. It catalyses the reaction L-aspartate 4-semialdehyde + pyruvate = (2S,4S)-4-hydroxy-2,3,4,5-tetrahydrodipicolinate + H2O + H(+). Its pathway is amino-acid biosynthesis; L-lysine biosynthesis via DAP pathway; (S)-tetrahydrodipicolinate from L-aspartate: step 3/4. In terms of biological role, catalyzes the condensation of (S)-aspartate-beta-semialdehyde [(S)-ASA] and pyruvate to 4-hydroxy-tetrahydrodipicolinate (HTPA). The sequence is that of 4-hydroxy-tetrahydrodipicolinate synthase from Streptococcus uberis (strain ATCC BAA-854 / 0140J).